Reading from the N-terminus, the 364-residue chain is Fructose-bisphosphate aldolase B (364 aa).

At Ala2 the chain carries N-acetylalanine. Lys13 bears the N6-succinyllysine mark. Ser36 carries the phosphoserine modification. Thr39 carries the post-translational modification Phosphothreonine. Position 43 (Arg43) interacts with beta-D-fructose 1,6-bisphosphate. Ser89 is subject to Phosphoserine. The residue at position 119 (Thr119) is a Phosphothreonine. Lys121 carries the N6-succinyllysine modification. At Ser132 the chain carries Phosphoserine. The active-site Proton acceptor is Glu188. Lys230 functions as the Schiff-base intermediate with dihydroxyacetone-P in the catalytic mechanism. Phosphoserine occurs at positions 272, 276, 299, and 301. Residue 272–274 (SGG) coordinates beta-D-fructose 1,6-bisphosphate. Position 304 (Arg304) interacts with beta-D-fructose 1,6-bisphosphate. Ser309 carries the phosphoserine modification. Position 317 is an N6-succinyllysine (Lys317).

This sequence belongs to the class I fructose-bisphosphate aldolase family. As to quaternary structure, homotetramer. Interacts with BBS1, BBS2, BBS4 and BBS7. Forms a ternary complex with G6PD and TP53; this interaction is direct.

It is found in the cytoplasm. It localises to the cytosol. Its subcellular location is the cytoskeleton. The protein resides in the microtubule organizing center. The protein localises to the centrosome. It is found in the centriolar satellite. The catalysed reaction is beta-D-fructose 1,6-bisphosphate = D-glyceraldehyde 3-phosphate + dihydroxyacetone phosphate. The enzyme catalyses beta-D-fructose 1-phosphate = D-glyceraldehyde + dihydroxyacetone phosphate. It functions in the pathway carbohydrate degradation; glycolysis; D-glyceraldehyde 3-phosphate and glycerone phosphate from D-glucose: step 4/4. Its pathway is carbohydrate biosynthesis; gluconeogenesis. The protein operates within carbohydrate metabolism; fructose metabolism. Its function is as follows. Catalyzes the aldol cleavage of fructose 1,6-biphosphate to form two triosephosphates dihydroxyacetone phosphate and D-glyceraldehyde 3-phosphate in glycolysis as well as the reverse stereospecific aldol addition reaction in gluconeogenesis. In fructolysis, metabolizes fructose 1-phosphate derived from the phosphorylation of dietary fructose by fructokinase into dihydroxyacetone phosphate and D-glyceraldehyde. Acts as an adapter independently of its enzymatic activity, exerts a tumor suppressor role by stabilizing the ternary complex with G6PD and TP53 to inhibit G6PD activity and keep oxidative pentose phosphate metabolism in check. The polypeptide is Fructose-bisphosphate aldolase B (Homo sapiens (Human)).